The primary structure comprises 600 residues: Elongation factor 4 (600 aa).

The tr-type G domain maps to Ser4–Ser186. GTP contacts are provided by residues Asp16–Thr21 and Asn133–Asp136.

The protein belongs to the TRAFAC class translation factor GTPase superfamily. Classic translation factor GTPase family. LepA subfamily.

The protein resides in the cell membrane. The enzyme catalyses GTP + H2O = GDP + phosphate + H(+). In terms of biological role, required for accurate and efficient protein synthesis under certain stress conditions. May act as a fidelity factor of the translation reaction, by catalyzing a one-codon backward translocation of tRNAs on improperly translocated ribosomes. Back-translocation proceeds from a post-translocation (POST) complex to a pre-translocation (PRE) complex, thus giving elongation factor G a second chance to translocate the tRNAs correctly. Binds to ribosomes in a GTP-dependent manner. The sequence is that of Elongation factor 4 from Mycoplasma capricolum subsp. capricolum (strain California kid / ATCC 27343 / NCTC 10154).